The primary structure comprises 627 residues: uncharacterized protein (627 aa).

The span at M1 to E20 shows a compositional bias: basic and acidic residues. Disordered stretches follow at residues M1–I22 and L578–V606. The segment covering S582–E592 has biased composition (acidic residues).

This is an uncharacterized protein from Rickettsia prowazekii (strain Madrid E).